A 360-amino-acid polypeptide reads, in one-letter code: MAEKVNVCIVGSGNWGSAIAKIVGANAAALPEFEERVTMFVYEEMIDGKKLTEIINETHENVKYLKGHKLPTNVVAVPDLVEAAKNADILIFVVPHQFIPNFCKQLLGKIKPNAIAISLIKGFDKAEGGGIDLISHIITRHLKIPCAVLMGANLANEVAEGNFCETTIGCTDKKYGKVLRDLFQANHFRVVVVEDADAVEVCGALKNIVACGAGFVDGLKLGDNTKAAVIRLGLMEMIRFVDVFYPGSKLSTFFESCGVADLITTCYGGRNRRVSEAFVTSGKTIEELEKEMLNGQKLQGPPTAEEVNYMLKNKGLEDKFPLFTAIHKICINQLKPKDLIDCIRNHPEHMDTFIMPSPKL.

Residues Gly11–Gly16, Phe98, Lys121, and Ala155 each bind NAD(+). Residue Lys121 coordinates substrate. Lys206 (proton acceptor) is an active-site residue. The NAD(+) site is built by Arg270 and Gln299. Substrate is bound at residue Arg270–Asn271.

The protein belongs to the NAD-dependent glycerol-3-phosphate dehydrogenase family. As to quaternary structure, homodimer.

Its subcellular location is the cytoplasm. It carries out the reaction sn-glycerol 3-phosphate + NAD(+) = dihydroxyacetone phosphate + NADH + H(+). It participates in phospholipid metabolism; alpha-glycerophosphate cycle. The polypeptide is Glycerol-3-phosphate dehydrogenase [NAD(+)], cytoplasmic (Gpdh1) (Drosophila kanekoi (Fruit fly)).